Consider the following 123-residue polypeptide: uncharacterized protein (123 aa).

Positions 17-117 (SNDNAFLVDV…NNQDKGWKQN (101 aa)) constitute a Rhodanese domain.

This is an uncharacterized protein from Rickettsia rickettsii.